A 386-amino-acid polypeptide reads, in one-letter code: Succinate--CoA ligase [ADP-forming] subunit beta (386 aa).

The ATP-grasp domain occupies 9–244 (KQILKRFGIS…YDEEIPEEIE (236 aa)). Residues K46, 53-55 (GRG), E99, C102, and E107 each bind ATP. Mg(2+) contacts are provided by N199 and D213. Residues N264 and 320-322 (GIM) contribute to the substrate site.

The protein belongs to the succinate/malate CoA ligase beta subunit family. In terms of assembly, heterotetramer of two alpha and two beta subunits. Mg(2+) is required as a cofactor.

It catalyses the reaction succinate + ATP + CoA = succinyl-CoA + ADP + phosphate. The catalysed reaction is GTP + succinate + CoA = succinyl-CoA + GDP + phosphate. The protein operates within carbohydrate metabolism; tricarboxylic acid cycle; succinate from succinyl-CoA (ligase route): step 1/1. In terms of biological role, succinyl-CoA synthetase functions in the citric acid cycle (TCA), coupling the hydrolysis of succinyl-CoA to the synthesis of either ATP or GTP and thus represents the only step of substrate-level phosphorylation in the TCA. The beta subunit provides nucleotide specificity of the enzyme and binds the substrate succinate, while the binding sites for coenzyme A and phosphate are found in the alpha subunit. The protein is Succinate--CoA ligase [ADP-forming] subunit beta of Ehrlichia ruminantium (strain Welgevonden).